The sequence spans 214 residues: Alpha-S1-casein (214 aa).

The signal sequence occupies residues 1–15 (MKLLILTCLVAVALA). The tract at residues 59 to 91 (IGSESTEDQAMEDAKQMKAGSSSSSEEIVPNSA) is disordered. Residues S61, S63, S79, S80, S81, S82, S83, S90, and S130 each carry the phosphoserine modification.

It belongs to the alpha-casein family. In terms of tissue distribution, mammary gland specific. Secreted in milk.

It localises to the secreted. In terms of biological role, important role in the capacity of milk to transport calcium phosphate. The chain is Alpha-S1-casein (CSN1S1) from Capra hircus (Goat).